The following is a 475-amino-acid chain: Flavin-dependent monooxygenase (475 aa).

This sequence belongs to the aromatic-ring hydroxylase family. The cofactor is FAD.

It localises to the cytoplasm. The enzyme catalyses a tetracycline + NADPH + O2 + H(+) = an 11a-hydroxytetracycline + NADP(+) + H2O. It catalyses the reaction tetracycline + NADPH + O2 + H(+) = 11a-hydroxytetracycline + NADP(+) + H2O. Its activity is regulated as follows. Inhibited by anhydrotetracycline. Functionally, an FAD-requiring monooxygenase active on some tetracycline antibiotic derivatives, which leads to their inactivation. Hydroxylates carbon 11a of tetracycline and some analogs. Confers resistance to tetracycline and doxycycline via an oxidoreductase activity; probably monooxygenates the antibiotics. Does not act on tigecycline. This Mycobacteroides abscessus (strain ATCC 19977 / DSM 44196 / CCUG 20993 / CIP 104536 / JCM 13569 / NCTC 13031 / TMC 1543 / L948) (Mycobacterium abscessus) protein is Flavin-dependent monooxygenase.